Consider the following 632-residue polypeptide: 2-hydroxyacyl-CoA lyase 2 (632 aa).

The chain crosses the membrane as a helical span at residues 10-30; that stretch reads AWGFFSSFLLLAFGTLVAALL. Position 98 (glutamate 98) interacts with thiamine diphosphate. A thiamine pyrophosphate binding region spans residues 470-550; sequence DFVGTAAYLV…VMALIGNDAG (81 aa). Residues aspartate 521 and asparagine 547 each coordinate Mg(2+).

It belongs to the TPP enzyme family. It depends on Mg(2+) as a cofactor. Requires thiamine diphosphate as cofactor.

It localises to the endoplasmic reticulum membrane. It carries out the reaction 2-hydroxyoctadecanoyl-CoA = heptadecanal + formyl-CoA. The catalysed reaction is (2R)-hydroxyhexadecanoyl-CoA = pentadecanal + formyl-CoA. Functionally, endoplasmic reticulum 2-OH acyl-CoA lyase involved in the cleavage (C1 removal) reaction in the fatty acid alpha-oxydation in a thiamine pyrophosphate (TPP)-dependent manner. Involved in the phytosphingosine degradation pathway. This chain is 2-hydroxyacyl-CoA lyase 2 (ILVBL), found in Bos taurus (Bovine).